A 214-amino-acid chain; its full sequence is MNNLKRFTKSIFSCIALSGLLFLGGCETLPPTTDLSPITVDNATQAKAWELQGKLAIRTPQDKLSANLYWRHSEERDELTLTTMLGTTVLTLDATPNSAHLHIDGKDFRDSNAQALLERVSGWSIPINDLPLWITGQVGGLDRVITVDSNGKTKQIQNSQTLPPWVVTFLSWQPQSGAEVPYQLKLERGDLQLKLQLNQWQALGKPSILLGEKP.

Positions 1-25 (MNNLKRFTKSIFSCIALSGLLFLGG) are cleaved as a signal peptide. A lipid anchor (N-palmitoyl cysteine) is attached at cysteine 26. A lipid anchor (S-diacylglycerol cysteine) is attached at cysteine 26.

The protein belongs to the LolB family. As to quaternary structure, monomer.

It is found in the cell outer membrane. In terms of biological role, plays a critical role in the incorporation of lipoproteins in the outer membrane after they are released by the LolA protein. In Shewanella sp. (strain MR-7), this protein is Outer-membrane lipoprotein LolB.